We begin with the raw amino-acid sequence, 328 residues long: Biotin synthase (328 aa).

The Radical SAM core domain maps to 48–277 (FVGNEVHLCS…GKRITVCGGR (230 aa)). Residues Cys66, Cys70, and Cys73 each coordinate [4Fe-4S] cluster. 2 residues coordinate [2Fe-2S] cluster: Ser142 and Cys202.

It belongs to the radical SAM superfamily. Biotin synthase family. As to quaternary structure, homodimer. Requires [4Fe-4S] cluster as cofactor. It depends on [2Fe-2S] cluster as a cofactor.

It catalyses the reaction (4R,5S)-dethiobiotin + (sulfur carrier)-SH + 2 reduced [2Fe-2S]-[ferredoxin] + 2 S-adenosyl-L-methionine = (sulfur carrier)-H + biotin + 2 5'-deoxyadenosine + 2 L-methionine + 2 oxidized [2Fe-2S]-[ferredoxin]. It participates in cofactor biosynthesis; biotin biosynthesis; biotin from 7,8-diaminononanoate: step 2/2. Its function is as follows. Catalyzes the conversion of dethiobiotin (DTB) to biotin by the insertion of a sulfur atom into dethiobiotin via a radical-based mechanism. The protein is Biotin synthase of Citrifermentans bemidjiense (strain ATCC BAA-1014 / DSM 16622 / JCM 12645 / Bem) (Geobacter bemidjiensis).